The sequence spans 359 residues: Homoserine dehydrogenase (359 aa).

A13, V15, V16, and A41 together coordinate NAD(+). V16 is a binding site for NADP(+). NADPH is bound at residue V16. Residues K60, T93, S94, and K117 each contribute to the NADPH site. T93 provides a ligand contact to NAD(+). T93 is a binding site for NADP(+). K117 lines the NADP(+) pocket. Positions 143, 146, 148, and 150 each coordinate Na(+). G205 and E208 together coordinate NADP(+). L-homoserine is bound by residues E208 and D219. Catalysis depends on K223, which acts as the Proton donor. K290 participates in a covalent cross-link: Glycyl lysine isopeptide (Lys-Gly) (interchain with G-Cter in ubiquitin). NAD(+) is bound at residue G340. G340 is a binding site for NADP(+). G340 is an NADPH binding site.

It belongs to the homoserine dehydrogenase family. Homodimer. A metal cation is required as a cofactor.

It carries out the reaction L-homoserine + NADP(+) = L-aspartate 4-semialdehyde + NADPH + H(+). The enzyme catalyses L-homoserine + NAD(+) = L-aspartate 4-semialdehyde + NADH + H(+). Its pathway is amino-acid biosynthesis; L-methionine biosynthesis via de novo pathway; L-homoserine from L-aspartate: step 3/3. The protein operates within amino-acid biosynthesis; L-threonine biosynthesis; L-threonine from L-aspartate: step 3/5. Functionally, catalyzes the conversion of L-aspartate-beta-semialdehyde (L-Asa) to L-homoserine (L-Hse), the third step in the biosynthesis of amino acids that derive from aspartate (the aspartate family of amino acids), including methioinine and threonine, the latter of which is a precursor to isoleucine; production of homoserine leads to a branch-point in the pathway as it can either be O-phosphorylated for processing to threonine, or O-acylated for processing to methionine. This is Homoserine dehydrogenase (HOM6) from Saccharomyces cerevisiae (strain ATCC 204508 / S288c) (Baker's yeast).